The chain runs to 296 residues: MSKVKLSGIFTALITPFKNDFSIDEDTFSKLIEHQISNNIHGLVPCGTTGEYSTLSFEEYCRVIELCVKVTNKRVPIIAGSGSNCTQETIKRTLYVQSLNVDAALVVVPYYNRPSDEGIFQHFKAVHDATDVPIIIYNIPQRTAIDPNDVLLARILSLPRIIGIKDATGDVSRPLNLKLLIDKEFALFTGNDATSLGFYAQGGGTGCISAVSNVIPKIYSDMHNAFFAHNIKEAMDANASIFKLSKVLFCQSNPSPTKYAMSLIKGISPTVRLPLVELTQENKLKVENMLKELNLI.

Pyruvate is bound at residue Thr-49. The active-site Proton donor/acceptor is Tyr-137. Residue Lys-165 is the Schiff-base intermediate with substrate of the active site. Residue Ile-208 participates in pyruvate binding.

Belongs to the DapA family. In terms of assembly, homotetramer; dimer of dimers.

Its subcellular location is the cytoplasm. The catalysed reaction is L-aspartate 4-semialdehyde + pyruvate = (2S,4S)-4-hydroxy-2,3,4,5-tetrahydrodipicolinate + H2O + H(+). It functions in the pathway amino-acid biosynthesis; L-lysine biosynthesis via DAP pathway; (S)-tetrahydrodipicolinate from L-aspartate: step 3/4. Its function is as follows. Catalyzes the condensation of (S)-aspartate-beta-semialdehyde [(S)-ASA] and pyruvate to 4-hydroxy-tetrahydrodipicolinate (HTPA). The polypeptide is 4-hydroxy-tetrahydrodipicolinate synthase (Ehrlichia canis (strain Jake)).